A 597-amino-acid chain; its full sequence is Arginine--tRNA ligase (597 aa).

The 'HIGH' region motif lies at 138 to 148 (ANPTGPMHVGH).

The protein belongs to the class-I aminoacyl-tRNA synthetase family. Monomer.

The protein resides in the cytoplasm. The enzyme catalyses tRNA(Arg) + L-arginine + ATP = L-arginyl-tRNA(Arg) + AMP + diphosphate. In Rhodopseudomonas palustris (strain HaA2), this protein is Arginine--tRNA ligase.